The following is a 152-amino-acid chain: Putative pseudoazurin (152 aa).

The N-terminal stretch at 1–23 (MPLKFGLIVATAALIASAASLMA) is a signal peptide. The Plastocyanin-like domain occupies 28–116 (VQMLNKGTDG…MGMVALIQVG (89 aa)). H63, C101, H104, and M109 together coordinate Cu cation.

Cu cation serves as cofactor.

Its subcellular location is the periplasm. Its function is as follows. This soluble electron transfer copper protein is required for the inactivation of copper-containing nitrite reductase in the presence of oxygen. The protein is Putative pseudoazurin (azu) of Rhizobium leguminosarum bv. viciae.